The sequence spans 239 residues: Ribose-5-phosphate isomerase A (239 aa).

Substrate is bound by residues 30 to 33 (SGST), 87 to 90 (DGAD), and 100 to 103 (KGGG). Glu109 functions as the Proton acceptor in the catalytic mechanism. A substrate-binding site is contributed by Lys127.

This sequence belongs to the ribose 5-phosphate isomerase family. As to quaternary structure, homodimer.

It catalyses the reaction aldehydo-D-ribose 5-phosphate = D-ribulose 5-phosphate. The protein operates within carbohydrate degradation; pentose phosphate pathway; D-ribose 5-phosphate from D-ribulose 5-phosphate (non-oxidative stage): step 1/1. Functionally, catalyzes the reversible conversion of ribose-5-phosphate to ribulose 5-phosphate. This is Ribose-5-phosphate isomerase A from Synechococcus sp. (strain CC9605).